The primary structure comprises 540 residues: Glucose-6-phosphate isomerase (540 aa).

The active-site Proton donor is Glu-350. Active-site residues include His-381 and Lys-503.

It belongs to the GPI family.

Its subcellular location is the cytoplasm. The enzyme catalyses alpha-D-glucose 6-phosphate = beta-D-fructose 6-phosphate. It functions in the pathway carbohydrate biosynthesis; gluconeogenesis. Its pathway is carbohydrate degradation; glycolysis; D-glyceraldehyde 3-phosphate and glycerone phosphate from D-glucose: step 2/4. Its function is as follows. Catalyzes the reversible isomerization of glucose-6-phosphate to fructose-6-phosphate. The sequence is that of Glucose-6-phosphate isomerase from Burkholderia ambifaria (strain MC40-6).